Consider the following 356-residue polypeptide: Probable farnesyl diphosphate synthase DDB_G0278823 (356 aa).

Residues Lys-55, Arg-58, and Gln-94 each contribute to the isopentenyl diphosphate site. 2 residues coordinate Mg(2+): Asp-101 and Asp-105. Residue Arg-110 participates in dimethylallyl diphosphate binding. Arg-111 contacts isopentenyl diphosphate. Positions 203, 204, 243, 260, and 269 each coordinate dimethylallyl diphosphate.

It belongs to the FPP/GGPP synthase family. It depends on Mg(2+) as a cofactor.

It localises to the cytoplasm. The catalysed reaction is isopentenyl diphosphate + dimethylallyl diphosphate = (2E)-geranyl diphosphate + diphosphate. The enzyme catalyses isopentenyl diphosphate + (2E)-geranyl diphosphate = (2E,6E)-farnesyl diphosphate + diphosphate. The protein operates within isoprenoid biosynthesis; farnesyl diphosphate biosynthesis; farnesyl diphosphate from geranyl diphosphate and isopentenyl diphosphate: step 1/1. Its pathway is isoprenoid biosynthesis; geranyl diphosphate biosynthesis; geranyl diphosphate from dimethylallyl diphosphate and isopentenyl diphosphate: step 1/1. Inhibited by aminobisphosphonate drugs (aBP), such as risedronate and alendronate. Functionally, key enzyme in isoprenoid biosynthesis which catalyzes the formation of farnesyl diphosphate (FPP), a sterol precursor. This chain is Probable farnesyl diphosphate synthase DDB_G0278823, found in Dictyostelium discoideum (Social amoeba).